A 297-amino-acid polypeptide reads, in one-letter code: Coatomer subunit epsilon-2 (297 aa).

Belongs to the COPE family. As to quaternary structure, oligomeric complex that consists of at least the alpha, beta, beta', gamma, delta, epsilon and zeta subunits.

It is found in the cytoplasm. The protein resides in the golgi apparatus membrane. Its subcellular location is the cytoplasmic vesicle. It localises to the COPI-coated vesicle membrane. Its function is as follows. The coatomer is a cytosolic protein complex that binds to dilysine motifs and reversibly associates with Golgi non-clathrin-coated vesicles, which further mediate biosynthetic protein transport from the ER, via the Golgi up to the trans Golgi network. The coatomer complex is required for budding from Golgi membranes, and is essential for the retrograde Golgi-to-ER transport of dilysine-tagged proteins. This Oryza sativa subsp. indica (Rice) protein is Coatomer subunit epsilon-2.